The following is a 465-amino-acid chain: Putative adhesin P1-like protein MPN_286 (465 aa).

Disordered stretches follow at residues 9–48, 59–78, and 93–167; these read GNGHRYGNDHRGSNSSTSGVTTQGQQSQNASGTEPASTFS, QGTLGGSQTTTTGKDIPKWP, and WRND…LPPN. The segment covering 21–37 has biased composition (low complexity); it reads SNSSTSGVTTQGQQSQN. The segment covering 38 to 48 has biased composition (polar residues); the sequence is ASGTEPASTFS. Residues 111–131 show a composition bias toward low complexity; that stretch reads TSATGSGQQGSSSGTTNSAGN. Residues 135 to 144 are compositionally biased toward basic and acidic residues; the sequence is LKQDKVDKSG. Positions 145-156 are enriched in polar residues; it reads DSVTVAETTSGD. Over residues 157–167 the composition is skewed to low complexity; sequence NLTNYTNLPPN.

Belongs to the adhesin P1 family.

This chain is Putative adhesin P1-like protein MPN_286, found in Mycoplasma pneumoniae (strain ATCC 29342 / M129 / Subtype 1) (Mycoplasmoides pneumoniae).